Reading from the N-terminus, the 467-residue chain is Glutamate--tRNA ligase (467 aa).

The 'HIGH' region motif lies at 10-20; that stretch reads PSPTGYLHVGG. Residues 238 to 242 carry the 'KMSKS' region motif; sequence RLSKR. Residue Lys-241 participates in ATP binding.

It belongs to the class-I aminoacyl-tRNA synthetase family. Glutamate--tRNA ligase type 1 subfamily. Monomer.

The protein resides in the cytoplasm. The enzyme catalyses tRNA(Glu) + L-glutamate + ATP = L-glutamyl-tRNA(Glu) + AMP + diphosphate. Functionally, catalyzes the attachment of glutamate to tRNA(Glu) in a two-step reaction: glutamate is first activated by ATP to form Glu-AMP and then transferred to the acceptor end of tRNA(Glu). The polypeptide is Glutamate--tRNA ligase (Citrifermentans bemidjiense (strain ATCC BAA-1014 / DSM 16622 / JCM 12645 / Bem) (Geobacter bemidjiensis)).